We begin with the raw amino-acid sequence, 295 residues long: Acetylglutamate kinase (295 aa).

Residues Gly66–Gly67, Arg88, and Asn193 each bind substrate.

It belongs to the acetylglutamate kinase family. ArgB subfamily.

It is found in the cytoplasm. The catalysed reaction is N-acetyl-L-glutamate + ATP = N-acetyl-L-glutamyl 5-phosphate + ADP. Its pathway is amino-acid biosynthesis; L-arginine biosynthesis; N(2)-acetyl-L-ornithine from L-glutamate: step 2/4. Its function is as follows. Catalyzes the ATP-dependent phosphorylation of N-acetyl-L-glutamate. In Afipia carboxidovorans (strain ATCC 49405 / DSM 1227 / KCTC 32145 / OM5) (Oligotropha carboxidovorans), this protein is Acetylglutamate kinase.